The sequence spans 109 residues: Nucleoid-associated protein APL_0075 (109 aa).

Residues 1–21 are disordered; it reads MFGKGGLGGLMKQAQQMQERM. A compositionally biased stretch (low complexity) spans 10-19; it reads LMKQAQQMQE.

Belongs to the YbaB/EbfC family. As to quaternary structure, homodimer.

It is found in the cytoplasm. It localises to the nucleoid. Its function is as follows. Binds to DNA and alters its conformation. May be involved in regulation of gene expression, nucleoid organization and DNA protection. This is Nucleoid-associated protein APL_0075 from Actinobacillus pleuropneumoniae serotype 5b (strain L20).